We begin with the raw amino-acid sequence, 293 residues long: Glycerophosphodiester phosphodiesterase (293 aa).

The first 26 residues, Met-1 to Ala-26, serve as a signal peptide directing secretion. In terms of domain architecture, GP-PDE spans Ile-38 to Lys-290. His-43 (proton acceptor) is an active-site residue. Positions 43, 44, and 70 each coordinate sn-glycerol 3-phosphate. Glu-70 and Asp-72 together coordinate Ca(2+). The sn-glycerol 3-phosphate site is built by His-85, Glu-152, and Gln-188. The active-site Proton donor is His-85. Glu-152 lines the Ca(2+) pocket.

Belongs to the glycerophosphoryl diester phosphodiesterase family. Requires Ca(2+) as cofactor.

The protein resides in the secreted. The enzyme catalyses a sn-glycero-3-phosphodiester + H2O = an alcohol + sn-glycerol 3-phosphate + H(+). In terms of biological role, glycerophosphodiester phosphodiesterase hydrolyzes glycerophosphodiesters into glycerol-3-phosphate (G3P) and the corresponding alcohol. Involved in wall teichoic acid (WTA) metabolism during phosphate starvation. Catalyzes the degradation of WTA, enabling the utilization of WTA as a phosphate reserve under limiting conditions. Is highly selective for the poly(gylcerol phosphate) WTA backbone and catalyzes exolytic cleavage of individual monomer units. In vitro is active toward the WTA oligomer mimics glycerophosphoglycerol (GPG) and bis-glycerophosphoglycerol (bGPG). In Bacillus subtilis (strain 168), this protein is Glycerophosphodiester phosphodiesterase.